The primary structure comprises 446 residues: Choline monooxygenase, chloroplastic (446 aa).

The N-terminal 65 residues, 1–65 (MAASATTMLL…NTSTNKIITK (65 aa)), are a transit peptide targeting the chloroplast. In terms of domain architecture, Rieske spans 127–234 (WQVAGYSEQV…VAEWGPFILI (108 aa)). The [2Fe-2S] cluster site is built by Cys-169, His-171, Cys-188, and His-191. The Fe cation site is built by His-294 and His-299.

The protein belongs to the choline monooxygenase family. [2Fe-2S] cluster serves as cofactor. Requires Fe cation as cofactor. It depends on Mg(2+) as a cofactor. As to expression, expressed in roots and leaves.

It localises to the plastid. The protein resides in the chloroplast stroma. It carries out the reaction choline + 2 reduced [2Fe-2S]-[ferredoxin] + O2 + 2 H(+) = betaine aldehyde hydrate + 2 oxidized [2Fe-2S]-[ferredoxin] + H2O. The protein operates within amine and polyamine biosynthesis; betaine biosynthesis via choline pathway; betaine aldehyde from choline (monooxygenase route): step 1/1. Its function is as follows. Catalyzes the first step of the osmoprotectant glycine betaine synthesis. The protein is Choline monooxygenase, chloroplastic (CMO) of Beta vulgaris (Sugar beet).